Consider the following 499-residue polypeptide: Maturase K (499 aa).

Belongs to the intron maturase 2 family. MatK subfamily.

The protein resides in the plastid. It is found in the chloroplast. Functionally, usually encoded in the trnK tRNA gene intron. Probably assists in splicing its own and other chloroplast group II introns. The polypeptide is Maturase K (Camellia sinensis (Tea plant)).